We begin with the raw amino-acid sequence, 887 residues long: Pyruvate dehydrogenase E1 component (887 aa).

As to quaternary structure, homodimer. Part of the PDH complex, consisting of multiple copies of pyruvate dehydrogenase (E1), dihydrolipoamide acetyltransferase (E2) and lipoamide dehydrogenase (E3). Requires thiamine diphosphate as cofactor.

It catalyses the reaction N(6)-[(R)-lipoyl]-L-lysyl-[protein] + pyruvate + H(+) = N(6)-[(R)-S(8)-acetyldihydrolipoyl]-L-lysyl-[protein] + CO2. Its function is as follows. Component of the pyruvate dehydrogenase (PDH) complex, that catalyzes the overall conversion of pyruvate to acetyl-CoA and CO(2). The polypeptide is Pyruvate dehydrogenase E1 component (aceE) (Buchnera aphidicola subsp. Acyrthosiphon pisum (strain APS) (Acyrthosiphon pisum symbiotic bacterium)).